Here is a 171-residue protein sequence, read N- to C-terminus: Der GTPase-activating protein YihI (171 aa).

Disordered stretches follow at residues 1–99 and 145–171; these read MKKP…PQAE and GLSYEDDEDDEEEEKQDDMMRLLKGGN. Basic and acidic residues predominate over residues 20–30; the sequence is TREELNQEARD. Residues 40–59 are compositionally biased toward low complexity; it reads HSAGSRANGSSASGSTAQNS. Residues 148-160 are compositionally biased toward acidic residues; the sequence is YEDDEDDEEEEKQ.

The protein belongs to the YihI family. Interacts with Der.

In terms of biological role, a GTPase-activating protein (GAP) that modifies Der/EngA GTPase function. May play a role in ribosome biogenesis. This is Der GTPase-activating protein YihI from Enterobacter sp. (strain 638).